A 362-amino-acid chain; its full sequence is Stress response regulator protein 1 (362 aa).

Disordered stretches follow at residues 1-39 (MTRL…SLVQ) and 163-188 (TLKS…ETKT). Residues 19–39 (PSQLLHSASLSSSPSSPSLVQ) are compositionally biased toward low complexity. Residues 209 to 327 (KFLLVDDNLI…LDFMANVIDE (119 aa)) form the Response regulatory domain. 4-aspartylphosphate is present on Asp260.

Its function is as follows. Required for stress adaptation, morphogenesis and virulence. The sequence is that of Stress response regulator protein 1 (SRR1) from Lodderomyces elongisporus (strain ATCC 11503 / CBS 2605 / JCM 1781 / NBRC 1676 / NRRL YB-4239) (Yeast).